We begin with the raw amino-acid sequence, 227 residues long: Large ribosomal subunit protein uL3 (227 aa).

Residue glutamine 151 is modified to N5-methylglutamine.

This sequence belongs to the universal ribosomal protein uL3 family. In terms of assembly, part of the 50S ribosomal subunit. Forms a cluster with proteins L14 and L19. Post-translationally, methylated by PrmB.

In terms of biological role, one of the primary rRNA binding proteins, it binds directly near the 3'-end of the 23S rRNA, where it nucleates assembly of the 50S subunit. This chain is Large ribosomal subunit protein uL3, found in Gluconobacter oxydans (strain 621H) (Gluconobacter suboxydans).